Here is a 211-residue protein sequence, read N- to C-terminus: Protein-L-isoaspartate O-methyltransferase (211 aa).

Ser62 is a catalytic residue.

The protein belongs to the methyltransferase superfamily. L-isoaspartyl/D-aspartyl protein methyltransferase family.

The protein resides in the cytoplasm. It carries out the reaction [protein]-L-isoaspartate + S-adenosyl-L-methionine = [protein]-L-isoaspartate alpha-methyl ester + S-adenosyl-L-homocysteine. Catalyzes the methyl esterification of L-isoaspartyl residues in peptides and proteins that result from spontaneous decomposition of normal L-aspartyl and L-asparaginyl residues. It plays a role in the repair and/or degradation of damaged proteins. This Shewanella amazonensis (strain ATCC BAA-1098 / SB2B) protein is Protein-L-isoaspartate O-methyltransferase.